The sequence spans 324 residues: Dioxygenase tasH (324 aa).

Residues 1-25 (MRSMSLWMLIGPVTGIATWASLRYA) form the signal peptide. Residues histidine 50, histidine 96, and histidine 284 each coordinate Zn(2+).

This sequence belongs to the DODA-type extradiol aromatic ring-opening dioxygenase family. Monomer. Zn(2+) is required as a cofactor.

Dioxygenase; part of the gene cluster that mediates the biosynthesis of the tetramic acids Sch210971 and Sch210972, potential anti-HIV fungal natural product that contain a decalin core. The PKS module of tasS together with the enoylreductase tasC catalyze the formation of the polyketide unit which is then conjugated to 4-hydroxyl-4-methyl glutamate (HMG) by the condensation domain of the tasS NRPS module. One unique structural feature of Sch210971 and Sch210972 is the tetramic acid motif proposed to be derived from the non-proteinogenic amino acid HMG, by a Dieckmann-type condensation catalyzed by the reductase domain of tasS. The aldolase tasA catalyzes the aldol condensation of 2 molecules of pyruvic acid to yield the intermediate 4-hydroxyl-4-methyl-2-oxoglutarate (HMOG), which can then be stereoselectively transaminated, may be by tasG, to form HMG. The Diels-Alderase tas3 then uses the Dieckmann product of tasS as substrate and catalyzes the Diels-Alder cycloaddition to form the decalin ring of Sch210971 and Sch210972. The protein is Dioxygenase tasH of Hapsidospora irregularis.